The primary structure comprises 67 residues: DNA-directed RNA polymerase subunit omega (67 aa).

This sequence belongs to the RNA polymerase subunit omega family. The RNAP catalytic core consists of 2 alpha, 1 beta, 1 beta' and 1 omega subunit. When a sigma factor is associated with the core the holoenzyme is formed, which can initiate transcription.

It catalyses the reaction RNA(n) + a ribonucleoside 5'-triphosphate = RNA(n+1) + diphosphate. Its function is as follows. Promotes RNA polymerase assembly. Latches the N- and C-terminal regions of the beta' subunit thereby facilitating its interaction with the beta and alpha subunits. This chain is DNA-directed RNA polymerase subunit omega, found in Nautilia profundicola (strain ATCC BAA-1463 / DSM 18972 / AmH).